The chain runs to 915 residues: Scaffold attachment factor B1 (915 aa).

Low complexity predominate over residues 1-24 (MAETLSGLGDSGAAGAAALSSASS). The interval 1–33 (MAETLSGLGDSGAAGAAALSSASSETGTRRLSD) is disordered. Alanine 2 carries the N-acetylalanine modification. 2 positions are modified to phosphoserine: serine 24 and serine 55. In terms of domain architecture, SAP spans 31 to 65 (LSDLRVIDLRAELRKRNVDSSGNKSVLMERLKKAI). The tract at residues 64–118 (AIEDEGGNPDEIEITSEGNKKTSKRSSKGRKPEEEGVEDNGLEENSGDGQEDVET) is disordered. The segment covering 67-77 (DEGGNPDEIEI) has biased composition (acidic residues). A Phosphoserine modification is found at serine 79. Positions 98–118 (EGVEDNGLEENSGDGQEDVET) are enriched in acidic residues. Glycyl lysine isopeptide (Lys-Gly) (interchain with G-Cter in SUMO2) cross-links involve residues lysine 172 and lysine 186. A Phosphothreonine modification is found at threonine 188. Residues serine 195, serine 197, and serine 209 each carry the phosphoserine modification. Positions 221-407 (LGETCKSEPV…EKGRSSCGRN (187 aa)) are disordered. Positions 225 to 234 (CKSEPVKEES) are enriched in basic and acidic residues. A Glycyl lysine isopeptide (Lys-Gly) (interchain with G-Cter in SUMO) cross-link involves residue lysine 231. The segment covering 275–286 (SESTAHAQSSKA) has biased composition (polar residues). The segment covering 293–309 (VKREPAEQPGDGERTDC) has biased composition (basic and acidic residues). Lysine 294 participates in a covalent cross-link: Glycyl lysine isopeptide (Lys-Gly) (interchain with G-Cter in SUMO). Positions 319-330 (EQSSAASELAEA) are enriched in low complexity. The span at 346 to 359 (EARDSKEDGRKFDF) shows a compositional bias: basic and acidic residues. The span at 371–383 (ESSTSEGADQKMS) shows a compositional bias: polar residues. A Glycyl lysine isopeptide (Lys-Gly) (interchain with G-Cter in SUMO2) cross-link involves residue lysine 381. Phosphoserine is present on residues serine 383 and serine 384. Basic and acidic residues predominate over residues 390–401 (DTKRLSKEEKGR). Lysine 392 is covalently cross-linked (Glycyl lysine isopeptide (Lys-Gly) (interchain with G-Cter in SUMO2)). In terms of domain architecture, RRM spans 406-484 (RNFWVSGLSS…KMISVEKAKN (79 aa)). Residue serine 415 is modified to Phosphoserine. Basic and acidic residues-rich tracts occupy residues 477–551 (ISVE…ERSR) and 559–570 (GTERTVVMDKSK). Disordered stretches follow at residues 477–641 (ISVE…EREE), 671–708 (RERM…ERRP), and 749–915 (FDHR…TRRY). Glycyl lysine isopeptide (Lys-Gly) (interchain with G-Cter in SUMO2) cross-links involve residues lysine 483, lysine 514, lysine 543, and lysine 570. The segment at 528–792 (GDDGSGEKSK…RHGGPERHGR (265 aa)) is interaction with POLR2A. Interaction with SFRS1; SFRS9 and SFRS10. Residue lysine 578 forms a Glycyl lysine isopeptide (Lys-Gly) (interchain with G-Cter in SUMO1); alternate linkage. Lysine 578 participates in a covalent cross-link: Glycyl lysine isopeptide (Lys-Gly) (interchain with G-Cter in SUMO2); alternate. Phosphoserine is present on residues serine 580, serine 582, serine 601, and serine 604. Residues 581 to 641 (GSKERASKSQ…RMQAQWEREE (61 aa)) show a composition bias toward basic and acidic residues. Residues 599 to 616 (KRSVVSFDKVKEPRKSRD) carry the Nuclear localization signal motif. The interaction with SAFB2 stretch occupies residues 599 to 915 (KRSVVSFDKV…PSDARFTRRY (317 aa)). Lysine 607 is subject to N6-acetyllysine. Positions 749–796 (FDHRDRGRYPDHSVDRREGSRSMMGEREGQHYPERHGGPERHGRDSRD) are enriched in basic and acidic residues. Residue arginine 811 is modified to Omega-N-methylarginine. 2 stretches are compositionally biased toward basic and acidic residues: residues 817–832 (PRRD…DDRS) and 841–851 (MMDRDHKRWQG). Lysine 847 is covalently cross-linked (Glycyl lysine isopeptide (Lys-Gly) (interchain with G-Cter in SUMO2)). 3 positions are modified to asymmetric dimethylarginine: arginine 868, arginine 874, and arginine 884. The segment covering 892 to 901 (GMQGGFGGQS) has biased composition (gly residues). Residues 905-915 (RPSDARFTRRY) show a composition bias toward basic and acidic residues.

Monomer and homodimer. Forms heterodimers with SAFB2. Interacts with KHDRBS3. Interacts with CLK2. Interacts with POLR2A, SRSF1/ASF, SRSF9/SRp30c and SFSF10/TRA2B. Interacts with isoform 1 and isoform 2 of SRPK1 and inhibits its activity. Interacts with RBMX. Interacts with FUS. Interacts with ZBED4. In terms of processing, sumoylated by PIAS1 with SUMO1 and SUMO2/3, desumoylated by SENP1. Sumoylation is required for transcriptional repressor activity. In terms of tissue distribution, ubiquitous. Expressed at high levels in the CNS and at low levels in the liver. Expressed in a wide number of breast cancer cell lines.

The protein localises to the nucleus. Functionally, binds to scaffold/matrix attachment region (S/MAR) DNA and forms a molecular assembly point to allow the formation of a 'transcriptosomal' complex (consisting of SR proteins and RNA polymerase II) coupling transcription and RNA processing. Functions as an estrogen receptor corepressor and can also bind to the HSP27 promoter and decrease its transcription. Thereby acts as a negative regulator of cell proliferation. When associated with RBMX, binds to and stimulates transcription from the SREBF1 promoter. This Homo sapiens (Human) protein is Scaffold attachment factor B1 (SAFB).